The chain runs to 136 residues: Nucleoside diphosphate kinase (136 aa).

ATP is bound by residues Lys-10, Phe-58, Arg-86, Thr-92, Arg-104, and Asn-114. His-117 functions as the Pros-phosphohistidine intermediate in the catalytic mechanism.

It belongs to the NDK family. Homohexamer. Mg(2+) serves as cofactor.

It is found in the cytoplasm. The catalysed reaction is a 2'-deoxyribonucleoside 5'-diphosphate + ATP = a 2'-deoxyribonucleoside 5'-triphosphate + ADP. It carries out the reaction a ribonucleoside 5'-diphosphate + ATP = a ribonucleoside 5'-triphosphate + ADP. Its function is as follows. Major role in the synthesis of nucleoside triphosphates other than ATP. The ATP gamma phosphate is transferred to the NDP beta phosphate via a ping-pong mechanism, using a phosphorylated active-site intermediate. This Mycobacterium bovis (strain ATCC BAA-935 / AF2122/97) protein is Nucleoside diphosphate kinase.